A 487-amino-acid polypeptide reads, in one-letter code: MTVQTAQIVKNYIGGEWVESISTKMEAVYNPATGEVIAQVPLSTKVDVEQAVLAANEAFKSWSKTAVPKRARILFKYQQLLVDNWEDLAKLITIENGKSYNEAYGEVLRGIECVEFAAGAPTLMMGKQLPDIATGIESGMYRYPIGVIGGITPFNFPMMVPCWMFPLAIACGNTFVLKPSERTPLLAAKLVELAEEAGLPKGVLNIVNGAHDVVNGLLEHKLVKAISFVGSQPVAEYVYKKGTENLKRVQALAGAKNHSIVLSDANLELATKQIISAAFGSAGERCMAASVVTVQEEIADQLVGRLVEEANKIVIGNGLDEDVFLGPVIRDNHKERTIGYIDSGVEQGATLVRDGREDTAVKGAGYFVGPTIFDHVTQEMKIWQDEIFAPVLSIVRVKSLDEAIEIANESRFANGACIYTDSGASVRQFRETIESGMLGVNVGVPAPMAFFPFSGWKDSFYGDLHANGTDGVEFYTRKKMLTSRWEK.

NAD(+) is bound by residues phenylalanine 154, lysine 178, glutamate 181, arginine 182, and serine 231. Cysteine 286 acts as the Nucleophile in catalysis. Position 386 (glutamate 386) interacts with NAD(+).

Belongs to the aldehyde dehydrogenase family. IolA subfamily. As to quaternary structure, homotetramer.

It catalyses the reaction 3-oxopropanoate + NAD(+) + CoA + H2O = hydrogencarbonate + acetyl-CoA + NADH + H(+). The enzyme catalyses 2-methyl-3-oxopropanoate + NAD(+) + CoA + H2O = propanoyl-CoA + hydrogencarbonate + NADH + H(+). Its pathway is polyol metabolism; myo-inositol degradation into acetyl-CoA; acetyl-CoA from myo-inositol: step 7/7. Catalyzes the oxidation of malonate semialdehyde (MSA) and methylmalonate semialdehyde (MMSA) into acetyl-CoA and propanoyl-CoA, respectively. Is involved in a myo-inositol catabolic pathway. Bicarbonate, and not CO2, is the end-product of the enzymatic reaction. This chain is Malonate-semialdehyde dehydrogenase 3, found in Bacillus cereus (strain ZK / E33L).